The primary structure comprises 147 residues: uncharacterized protein (147 aa).

2 helical membrane-spanning segments follow: residues 4–26 (YLRVVLPLSLALNSYGVLAFFWG) and 123–145 (YALCVGFFVVLLQLLWGSARAYF).

The protein resides in the cell membrane. This is an uncharacterized protein from Treponema pallidum (strain Nichols).